The chain runs to 139 residues: Metallothiol transferase FosB (139 aa).

The VOC domain maps to 4 to 119; sequence GINHITYSVS…DGHKLELHTG (116 aa). Mg(2+) is bound by residues His7, His66, and Glu115. The active-site Proton donor/acceptor is Glu115.

Belongs to the fosfomycin resistance protein family. FosB subfamily. As to quaternary structure, homodimer. Requires Mg(2+) as cofactor.

The protein localises to the cytoplasm. Metallothiol transferase which confers resistance to fosfomycin by catalyzing the addition of a thiol cofactor to fosfomycin. L-cysteine is probably the physiological thiol donor. This is Metallothiol transferase FosB from Staphylococcus haemolyticus.